Reading from the N-terminus, the 169-residue chain is ATP synthase subunit b (169 aa).

The chain crosses the membrane as a helical span at residues 11–31; that stretch reads KLPLGNMLFIIISFLVLMVIL.

The protein belongs to the ATPase B chain family. As to quaternary structure, F-type ATPases have 2 components, F(1) - the catalytic core - and F(0) - the membrane proton channel. F(1) has five subunits: alpha(3), beta(3), gamma(1), delta(1), epsilon(1). F(0) has three main subunits: a(1), b(2) and c(10-14). The alpha and beta chains form an alternating ring which encloses part of the gamma chain. F(1) is attached to F(0) by a central stalk formed by the gamma and epsilon chains, while a peripheral stalk is formed by the delta and b chains.

The protein resides in the cell membrane. F(1)F(0) ATP synthase produces ATP from ADP in the presence of a proton or sodium gradient. F-type ATPases consist of two structural domains, F(1) containing the extramembraneous catalytic core and F(0) containing the membrane proton channel, linked together by a central stalk and a peripheral stalk. During catalysis, ATP synthesis in the catalytic domain of F(1) is coupled via a rotary mechanism of the central stalk subunits to proton translocation. Its function is as follows. Component of the F(0) channel, it forms part of the peripheral stalk, linking F(1) to F(0). The chain is ATP synthase subunit b from Leuconostoc citreum (strain KM20).